A 320-amino-acid chain; its full sequence is Apolipoprotein E (320 aa).

Positions 1-18 are cleaved as a signal peptide; it reads MKVLWAAFLVAFLAGCQG. Tandem repeats lie at residues 82–103, 104–125, 126–147, 148–169, 170–191, 192–213, 214–236, and 237–258. The segment at 82 to 199 is 8 X 22 AA approximate tandem repeats; the sequence is ALMDETMKEL…AERGVSAIRE (118 aa). Methionine sulfoxide is present on Met145. Position 149 is a phosphoserine (Ser149). The LDL and other lipoprotein receptors binding stretch occupies residues 160–170; the sequence is HLRKLRKRLLR. Residue 164-167 coordinates heparin; the sequence is LRKR. The segment at 212–293 is lipid-binding and lipoprotein association; that stretch reads AATVGSSLAS…SWFEPLVEDM (82 aa). Heparin is bound at residue 232-239; it reads GERLRARM. Residues 269–320 are homooligomerization; the sequence is QQMRLQAEAFQARLKSWFEPLVEDMQRQWAGLVEKVQAAVGASATPVPSDNH. Residues 281 to 293 form a specificity for association with VLDL region; it reads RLKSWFEPLVEDM.

It belongs to the apolipoprotein A1/A4/E family. Homotetramer. May interact with ABCA1; functionally associated with ABCA1 in the biogenesis of HDLs. May interact with APP/A4 amyloid-beta peptide; the interaction is extremely stable in vitro but its physiological significance is unclear. May interact with MAPT. May interact with MAP2. In the cerebrospinal fluid, interacts with secreted SORL1. Interacts with PMEL; this allows the loading of PMEL luminal fragment on ILVs to induce fibril nucleation. Post-translationally, APOE exists as multiple glycosylated and sialylated glycoforms within cells and in plasma. The extent of glycosylation and sialylation are tissue and context specific. In terms of processing, glycated in plasma VLDL. Phosphorylated by FAM20C in the extracellular medium.

It localises to the secreted. Its subcellular location is the extracellular space. The protein localises to the extracellular matrix. The protein resides in the extracellular vesicle. It is found in the endosome. It localises to the multivesicular body. In terms of biological role, APOE is an apolipoprotein, a protein associating with lipid particles, that mainly functions in lipoprotein-mediated lipid transport between organs via the plasma and interstitial fluids. APOE is a core component of plasma lipoproteins and is involved in their production, conversion and clearance. Apolipoproteins are amphipathic molecules that interact both with lipids of the lipoprotein particle core and the aqueous environment of the plasma. As such, APOE associates with chylomicrons, chylomicron remnants, very low density lipoproteins (VLDL) and intermediate density lipoproteins (IDL) but shows a preferential binding to high-density lipoproteins (HDL). It also binds a wide range of cellular receptors including the LDL receptor/LDLR, the LDL receptor-related proteins LRP1, LRP2 and LRP8 and the very low-density lipoprotein receptor/VLDLR that mediate the cellular uptake of the APOE-containing lipoprotein particles. Finally, APOE also has a heparin-binding activity and binds heparan-sulfate proteoglycans on the surface of cells, a property that supports the capture and the receptor-mediated uptake of APOE-containing lipoproteins by cells. A main function of APOE is to mediate lipoprotein clearance through the uptake of chylomicrons, VLDLs, and HDLs by hepatocytes. APOE is also involved in the biosynthesis by the liver of VLDLs as well as their uptake by peripheral tissues ensuring the delivery of triglycerides and energy storage in muscle, heart and adipose tissues. By participating in the lipoprotein-mediated distribution of lipids among tissues, APOE plays a critical role in plasma and tissues lipid homeostasis. APOE is also involved in two steps of reverse cholesterol transport, the HDLs-mediated transport of cholesterol from peripheral tissues to the liver, and thereby plays an important role in cholesterol homeostasis. First, it is functionally associated with ABCA1 in the biogenesis of HDLs in tissues. Second, it is enriched in circulating HDLs and mediates their uptake by hepatocytes. APOE also plays an important role in lipid transport in the central nervous system, regulating neuron survival and sprouting. This Saimiri boliviensis boliviensis (Bolivian squirrel monkey) protein is Apolipoprotein E (APOE).